Here is a 271-residue protein sequence, read N- to C-terminus: 3-methyl-2-oxobutanoate hydroxymethyltransferase (271 aa).

The Mg(2+) site is built by Asp-52 and Asp-91. 3-methyl-2-oxobutanoate is bound by residues Asp-52–Ser-53, Asp-91, and Lys-121. Mg(2+) is bound at residue Glu-123. The Proton acceptor role is filled by Glu-189.

The protein belongs to the PanB family. In terms of assembly, homodecamer; pentamer of dimers. The cofactor is Mg(2+).

It localises to the cytoplasm. The catalysed reaction is 3-methyl-2-oxobutanoate + (6R)-5,10-methylene-5,6,7,8-tetrahydrofolate + H2O = 2-dehydropantoate + (6S)-5,6,7,8-tetrahydrofolate. The protein operates within cofactor biosynthesis; (R)-pantothenate biosynthesis; (R)-pantoate from 3-methyl-2-oxobutanoate: step 1/2. In terms of biological role, catalyzes the reversible reaction in which hydroxymethyl group from 5,10-methylenetetrahydrofolate is transferred onto alpha-ketoisovalerate to form ketopantoate. The chain is 3-methyl-2-oxobutanoate hydroxymethyltransferase from Acidothermus cellulolyticus (strain ATCC 43068 / DSM 8971 / 11B).